The following is a 270-amino-acid chain: Release factor glutamine methyltransferase (270 aa).

S-adenosyl-L-methionine contacts are provided by residues 112 to 116 (GTGSG), aspartate 135, tryptophan 162, and asparagine 178. 178-181 (NPPY) serves as a coordination point for substrate.

This sequence belongs to the protein N5-glutamine methyltransferase family. PrmC subfamily.

It carries out the reaction L-glutaminyl-[peptide chain release factor] + S-adenosyl-L-methionine = N(5)-methyl-L-glutaminyl-[peptide chain release factor] + S-adenosyl-L-homocysteine + H(+). Methylates the class 1 translation termination release factors RF1/PrfA and RF2/PrfB on the glutamine residue of the universally conserved GGQ motif. This is Release factor glutamine methyltransferase from Bordetella pertussis (strain Tohama I / ATCC BAA-589 / NCTC 13251).